Reading from the N-terminus, the 320-residue chain is Annexin A5 (320 aa).

Ala-2 carries the post-translational modification N-acetylalanine. Annexin repeat units follow at residues 15-86, 87-158, 170-242, and 246-317; these read FDER…ALMK, PSRL…VLLQ, AQVE…AVVK, and SIPA…LLCG. Residue Lys-29 forms a Glycyl lysine isopeptide (Lys-Gly) (interchain with G-Cter in SUMO1); alternate linkage. Lys-29 participates in a covalent cross-link: Glycyl lysine isopeptide (Lys-Gly) (interchain with G-Cter in SUMO2); alternate. Position 37 is a phosphoserine (Ser-37). Residues Lys-70, Lys-76, Lys-79, Lys-97, and Lys-101 each carry the N6-acetyllysine modification. Lys-290 bears the N6-succinyllysine mark. A [IL]-x-C-x-x-[DE] motif motif is present at residues 314–319; it reads LLCGED.

This sequence belongs to the annexin family. As to quaternary structure, monomer. Binds ATRX and EIF5B. Interacts with hepatitis B virus (HBV). S-nitrosylation is induced by interferon-gamma and oxidatively-modified low-densitity lipoprotein (LDL(ox)) possibly implicating the iNOS-S100A8/9 transnitrosylase complex.

In terms of biological role, this protein is an anticoagulant protein that acts as an indirect inhibitor of the thromboplastin-specific complex, which is involved in the blood coagulation cascade. The protein is Annexin A5 (ANXA5) of Homo sapiens (Human).